The chain runs to 428 residues: ATP-dependent RNA helicase RhlB (428 aa).

Positions 9 to 37 (QKFSDFALHPLVVEALENKGFQYCTPIQA) match the Q motif motif. In terms of domain architecture, Helicase ATP-binding spans 40 to 219 (LPLTLSGRDV…FEQMNNAEYV (180 aa)). 53-60 (AQTGTGKT) contacts ATP. The short motif at 165–168 (DEAD) is the DEAD box element. Positions 245 to 390 (RLLQTLIEEE…VSKYNSDALL (146 aa)) constitute a Helicase C-terminal domain. Residues 394-428 (PAPKRLARTRTGNGPRRNSAPRRSGAPRNNRKRPG) form a disordered region.

This sequence belongs to the DEAD box helicase family. RhlB subfamily. In terms of assembly, component of the RNA degradosome, which is a multiprotein complex involved in RNA processing and mRNA degradation.

It is found in the cytoplasm. It carries out the reaction ATP + H2O = ADP + phosphate + H(+). DEAD-box RNA helicase involved in RNA degradation. Has RNA-dependent ATPase activity and unwinds double-stranded RNA. This chain is ATP-dependent RNA helicase RhlB, found in Yersinia pseudotuberculosis serotype O:1b (strain IP 31758).